The following is a 645-amino-acid chain: Transcription termination factor FttA (645 aa).

Positions 10–77 (APSNQNIMAT…IIVRIDESVR (68 aa)) are KHa. The interval 78 to 146 (KKEEDARKML…WTLRIRKATT (69 aa)) is KHb. Residues 187-391 (EISLTALGGF…LLIESTYGAK (205 aa)) are metallo-beta-lactamase N-terminus. Zn(2+) contacts are provided by His-250, His-252, Asp-254, His-255, His-337, and Asp-360. The segment at 392–586 (EDIQPTRQEV…CRMEKLDGFS (195 aa)) is beta-Casp. The interval 587 to 645 (GHSDYNQLTGFVQKLRPKLRRVLVNHGERRKSENLALAVRRMFRIPAHYPQIQESIKLF) is metallo-beta-lactamase C-terminus. Residue His-612 participates in Zn(2+) binding.

It belongs to the metallo-beta-lactamase superfamily. RNA-metabolizing metallo-beta-lactamase-like family. FttA subfamily. In terms of assembly, homodimer. Interacts with RNA polymerase (RNAP), interacts with the Spt4-Spt5 complex. The cofactor is Zn(2+).

Its function is as follows. Terminates transcription on the whole genome. Termination is linked to FttA-mediated RNA cleavage and does not require NTP hydrolysis. Cleaves endonucleolytically at the RNA exit channel of RNA polymerase (RNAP); the 5'-3' exonuclease activity of this protein degrades the nascent RNA released from RNAP. In terms of biological role, terminates transcription genome-wide in M.maripaludis. Restores wild-type growth to a strain of Methanococcus maripaludis depleted for this gene at 22 degrees Celsius and prevents transcriptional read-through. Transcription termination is most effective in vivo on RNAs with more than one U4-tract in their 3'-ends. Has endonuclease activity after U-rich tracts in transcription termination sequences. The chain is Transcription termination factor FttA from Cenarchaeum symbiosum (strain A).